The sequence spans 310 residues: Aspartate carbamoyltransferase catalytic subunit (310 aa).

Residues Arg55 and Thr56 each contribute to the carbamoyl phosphate site. Lys85 is an L-aspartate binding site. Carbamoyl phosphate contacts are provided by Arg106, His135, and Gln138. 2 residues coordinate L-aspartate: Arg168 and Arg230. Residues Leu268 and Pro269 each contribute to the carbamoyl phosphate site.

Belongs to the aspartate/ornithine carbamoyltransferase superfamily. ATCase family. As to quaternary structure, heterododecamer (2C3:3R2) of six catalytic PyrB chains organized as two trimers (C3), and six regulatory PyrI chains organized as three dimers (R2).

It catalyses the reaction carbamoyl phosphate + L-aspartate = N-carbamoyl-L-aspartate + phosphate + H(+). Its pathway is pyrimidine metabolism; UMP biosynthesis via de novo pathway; (S)-dihydroorotate from bicarbonate: step 2/3. Catalyzes the condensation of carbamoyl phosphate and aspartate to form carbamoyl aspartate and inorganic phosphate, the committed step in the de novo pyrimidine nucleotide biosynthesis pathway. This is Aspartate carbamoyltransferase catalytic subunit from Buchnera aphidicola subsp. Acyrthosiphon pisum (strain 5A).